The sequence spans 322 residues: Zinc finger C2HC domain-containing protein zchc-1A (322 aa).

2 consecutive C2HC/C3H-type zinc fingers follow at residues 9-38 and 119-148; these read PTFP…LASL and DYVQ…QATR. 8 residues coordinate Zn(2+): C13, C16, H28, C32, C123, C126, H138, and C142. Residues 150 to 159 are compositionally biased toward polar residues; that stretch reads QGGNLKSSGG. The tract at residues 150-322 is disordered; it reads QGGNLKSSGG…SRNNSRSRIF (173 aa). Over residues 174–220 the composition is skewed to basic and acidic residues; sequence NEGKKQESSSRNGSAERKPTTRGRDGSLLRARRDDSNDITSRRKSLD. Composition is skewed to polar residues over residues 221–238 and 264–274; these read TRTS…TSLS and LQQSSTPQQRL. The span at 276–295 shows a compositional bias: low complexity; it reads TPASTTTTASRSGSRTSSRA. Residues 296–305 show a composition bias toward basic and acidic residues; it reads CPRDDSRDSR. Residues 311 to 322 are compositionally biased toward low complexity; the sequence is NNSRNNSRSRIF.

Belongs to the ZC2HC1 family. Zn(2+) serves as cofactor.

This is Zinc finger C2HC domain-containing protein zchc-1A from Caenorhabditis elegans.